A 506-amino-acid chain; its full sequence is MVTIRADEISNIIRERIEQYNREVTIVNTGTVLQVGDGIARIYGLDEVMAGELVEFEEGTIGIALNLESNNVGVVLMGDGLMIQEGSSVKATGKIAQIPVSDAYLGRVINALANPIDGRGKISASESRLIESPAPGIISRRSVYEPLQTGLIAIDSMIPIGRGQRELIIGDRQTGKTAVATDTILNQQGQNVICVYVAIGQKASSVAQVVTSLQERGAMEYTIVVAETADSPATLQYLAPYTGAALAEYFMYREQHTLIIYDDLSKQAQAYRQMSLLLRRPPGREAYPGDVFYLHSRLLERAAKLSSQLGEGSMTALPIVETQSGDVSAYIPTNVISITDGQIFLSADLFNSGIRPAINVGISVSRVGSAAQIKAMKQVAGKLKLELAQFAELEAFAQFSSDLDKATQNQLARGQRLRELLKQSQSAPLTVEEQIMTIYTGTNGYLDGLEIGQVRKFLVQLRTYLKTNKPQFQEIIASTKTLTAEAESFLKEGIQEQLERFLLQEK.

170–177 is an ATP binding site; that stretch reads GDRQTGKT. Threonine 257 carries the post-translational modification Phosphothreonine.

The protein belongs to the ATPase alpha/beta chains family. As to quaternary structure, F-type ATPases have 2 components, CF(1) - the catalytic core - and CF(0) - the membrane proton channel. CF(1) has five subunits: alpha(3), beta(3), gamma(1), delta(1), epsilon(1). CF(0) has four main subunits: a, b, b' and c.

It is found in the plastid. Its subcellular location is the chloroplast thylakoid membrane. It catalyses the reaction ATP + H2O + 4 H(+)(in) = ADP + phosphate + 5 H(+)(out). In terms of biological role, produces ATP from ADP in the presence of a proton gradient across the membrane. The alpha chain is a regulatory subunit. The polypeptide is ATP synthase subunit alpha, chloroplastic (Olimarabidopsis pumila (Dwarf rocket)).